A 662-amino-acid chain; its full sequence is MINHITDNQFKLVSKYQPSGDQPQAIEQLVDNIEGGEKAQILMGATGTGKTYTMSQVISKVNKPTLVIAHNKTLAGQLYGEFKEFFPENAVEYFVSYYDYYQPEAYVPSSDTYIEKDSSVNDEIDKLRHSATSALLERNDVIVVASVSCIYGLGSPKEYADSVVSLRPGLEISRDKLLNDLVDIQFERNDIDFQRGRFRVRGDVVEIFPASRDEHAFRVEFFGDEIDRIREVEALTGQVLGEVDHLAIFPATHFVTNDDHMEVAVAKIQAELEEQLAVFEKEGKLLEAQRLKQRTEYDIEMLREMGYTNGVENYSRHMDGRSEGEPPYTLLDFFPDDFLIMIDESHMTMGQIKGMYNGDRSRKEMLVNYGFRLPSALDNRPLRREEFESHVHQIVYVSATPGDYENEQTETVIEQIIRPTGLLDPEVEVRPTMGQIDDLLGEINARVEKNERTFITTLTKKMAEDLTDYFKEMGIKVKYMHSDIKTLERTEIIRDLRLGVFDVLVGINLLREGIDVPEVSLVAILDADKEGFLRNERGLIQTIGRAARNSEGHVIMYADTVTQSMQRAIDETARRRKIQMAYNEEHGIVPQTIKKEIRDLIAVTKAVAKEEDKEVDINSLNKQERKELVKKLEKQMQEAVEVLDFELAAQIRDMMLEVKALD.

The region spanning 31–188 is the Helicase ATP-binding domain; it reads DNIEGGEKAQ…NDLVDIQFER (158 aa). 44–51 is a binding site for ATP; the sequence is GATGTGKT. The Beta-hairpin signature appears at 97-120; that stretch reads YYDYYQPEAYVPSSDTYIEKDSSV. A Helicase C-terminal domain is found at 435-601; sequence QIDDLLGEIN…TIKKEIRDLI (167 aa). The 36-residue stretch at 626–661 folds into the UVR domain; that stretch reads KELVKKLEKQMQEAVEVLDFELAAQIRDMMLEVKAL.

It belongs to the UvrB family. In terms of assembly, forms a heterotetramer with UvrA during the search for lesions. Interacts with UvrC in an incision complex.

The protein localises to the cytoplasm. The UvrABC repair system catalyzes the recognition and processing of DNA lesions. A damage recognition complex composed of 2 UvrA and 2 UvrB subunits scans DNA for abnormalities. Upon binding of the UvrA(2)B(2) complex to a putative damaged site, the DNA wraps around one UvrB monomer. DNA wrap is dependent on ATP binding by UvrB and probably causes local melting of the DNA helix, facilitating insertion of UvrB beta-hairpin between the DNA strands. Then UvrB probes one DNA strand for the presence of a lesion. If a lesion is found the UvrA subunits dissociate and the UvrB-DNA preincision complex is formed. This complex is subsequently bound by UvrC and the second UvrB is released. If no lesion is found, the DNA wraps around the other UvrB subunit that will check the other stand for damage. This Streptococcus pneumoniae serotype 19F (strain G54) protein is UvrABC system protein B.